Here is a 235-residue protein sequence, read N- to C-terminus: Sugar fermentation stimulation protein homolog (235 aa).

This sequence belongs to the SfsA family.

The sequence is that of Sugar fermentation stimulation protein homolog from Nitrosococcus oceani (strain ATCC 19707 / BCRC 17464 / JCM 30415 / NCIMB 11848 / C-107).